The primary structure comprises 122 residues: Flagellar protein FliT (122 aa).

A required for homodimerization region spans residues 1 to 50 (MTSTVEFINRWQRIALLSQSLLELAQRGEWDLLLQQEVSYLQSIETVMEK). Residues 60–98 (IQDMVAGYIKQTLDNEQLLKGLLQQRLDELSSLIGQSTR) are fliD binding.

Belongs to the FliT family. As to quaternary structure, homodimer. Interacts with FliD and FlhC.

It localises to the cytoplasm. It is found in the cytosol. In terms of biological role, dual-function protein that regulates the transcription of class 2 flagellar operons and that also acts as an export chaperone for the filament-capping protein FliD. As a transcriptional regulator, acts as an anti-FlhDC factor; it directly binds FlhC, thus inhibiting the binding of the FlhC/FlhD complex to class 2 promoters, resulting in decreased expression of class 2 flagellar operons. As a chaperone, effects FliD transition to the membrane by preventing its premature polymerization, and by directing it to the export apparatus. The sequence is that of Flagellar protein FliT from Salmonella schwarzengrund (strain CVM19633).